Reading from the N-terminus, the 37-residue chain is Small ribosomal subunit protein eS32 (37 aa).

The protein belongs to the eukaryotic ribosomal protein eS32 family. Part of the small ribosomal subunit.

This chain is Small ribosomal subunit protein eS32, found in Pyrococcus furiosus (strain ATCC 43587 / DSM 3638 / JCM 8422 / Vc1).